The primary structure comprises 355 residues: Protein RecA (355 aa).

67 to 74 (GPESSGKT) contacts ATP.

Belongs to the RecA family.

Its subcellular location is the cytoplasm. Its function is as follows. Can catalyze the hydrolysis of ATP in the presence of single-stranded DNA, the ATP-dependent uptake of single-stranded DNA by duplex DNA, and the ATP-dependent hybridization of homologous single-stranded DNAs. It interacts with LexA causing its activation and leading to its autocatalytic cleavage. The protein is Protein RecA of Proteus mirabilis (strain HI4320).